A 396-amino-acid chain; its full sequence is MKNSLFLIKDFISKETLSGLILFVVTVLAVTIANSDFGSYYFELFSTQLGINFGQLNASMSLLHWINDVLMAIFFLVVGLEIKREMLIGELSSVKKASFPIIAAIGGMIVPAILYISLNPDHITGFGVPMATDIAFALGILMLLGNKVNPAIKLFLVTLAVVDDLGAIVVVAIFYTNELHFEYFLYAFAVYSIIWFLNYKNVQKLTPYIILGVFLWIFIHKTGIHSTIAGVLLAFAIPLNKKADLEESVENLSVDNPLVKLEHALHNFSAFIIMPLFAFANAGVIIDFSNVIEHQLIVLGVALGLIIGKPIGIFSFTYLATKLKISVKPENVTWNDIFAVGFLGGIGFTMSIFISHLAFSDQTIVGAVKLGIFASSVIAAIIGSVLLILKAKKVEP.

The next 11 helical transmembrane spans lie at 17 to 37, 62 to 82, 98 to 118, 125 to 145, 154 to 174, 179 to 199, 209 to 229, 268 to 288, 296 to 316, 337 to 357, and 368 to 388; these read LSGL…NSDF, LLHW…GLEI, SFPI…YISL, GFGV…MLLG, LFLV…VAIF, LHFE…FLNY, IILG…STIA, FSAF…IIDF, LIVL…IFSF, IFAV…ISHL, and VKLG…VLLI.

Belongs to the NhaA Na(+)/H(+) (TC 2.A.33) antiporter family.

The protein resides in the cell inner membrane. The enzyme catalyses Na(+)(in) + 2 H(+)(out) = Na(+)(out) + 2 H(+)(in). Na(+)/H(+) antiporter that extrudes sodium in exchange for external protons. The polypeptide is Na(+)/H(+) antiporter NhaA 2 (Aliarcobacter butzleri (strain RM4018) (Arcobacter butzleri)).